The chain runs to 777 residues: Biotin sulfoxide reductase (777 aa).

Position 148 (Ser148) interacts with Mo-bis(molybdopterin guanine dinucleotide).

The protein belongs to the prokaryotic molybdopterin-containing oxidoreductase family. Requires Mo-bis(molybdopterin guanine dinucleotide) as cofactor.

The catalysed reaction is [thioredoxin]-disulfide + L-methionine + H2O = L-methionine (S)-S-oxide + [thioredoxin]-dithiol. In terms of biological role, this enzyme may serve as a scavenger, allowing the cell to utilize biotin sulfoxide as a biotin source. It reduces a spontaneous oxidation product of biotin, D-biotin D-sulfoxide (BSO or BDS), back to biotin. Also exhibits methionine-(S)-sulfoxide (Met-S-SO) reductase activity, acting specifically on the (S) enantiomer in the free, but not the protein-bound form. It thus plays a role in assimilation of oxidized methionines. The polypeptide is Biotin sulfoxide reductase (bisC) (Escherichia coli (strain K12)).